A 302-amino-acid chain; its full sequence is Ornithine carbamoyltransferase (302 aa).

Residues 52–55, Gln79, Arg103, and 130–133 contribute to the carbamoyl phosphate site; these read STRT and HPCQ. L-ornithine-binding positions include Asn161, Asp221, and 225–226; that span reads SM. Residues 261-262 and Arg289 each bind carbamoyl phosphate; that span reads CL.

The protein belongs to the aspartate/ornithine carbamoyltransferase superfamily. OTCase family.

It is found in the cytoplasm. The enzyme catalyses carbamoyl phosphate + L-ornithine = L-citrulline + phosphate + H(+). It functions in the pathway amino-acid biosynthesis; L-arginine biosynthesis; L-arginine from L-ornithine and carbamoyl phosphate: step 1/3. Functionally, reversibly catalyzes the transfer of the carbamoyl group from carbamoyl phosphate (CP) to the N(epsilon) atom of ornithine (ORN) to produce L-citrulline. The polypeptide is Ornithine carbamoyltransferase (Methanospirillum hungatei JF-1 (strain ATCC 27890 / DSM 864 / NBRC 100397 / JF-1)).